The following is a 164-amino-acid chain: Transcription elongation factor GreA (164 aa).

The protein belongs to the GreA/GreB family.

Its function is as follows. Necessary for efficient RNA polymerase transcription elongation past template-encoded arresting sites. The arresting sites in DNA have the property of trapping a certain fraction of elongating RNA polymerases that pass through, resulting in locked ternary complexes. Cleavage of the nascent transcript by cleavage factors such as GreA or GreB allows the resumption of elongation from the new 3'terminus. GreA releases sequences of 2 to 3 nucleotides. In Helicobacter acinonychis (strain Sheeba), this protein is Transcription elongation factor GreA.